A 483-amino-acid chain; its full sequence is NADH-quinone oxidoreductase subunit N (483 aa).

The next 13 helical transmembrane spans lie at 13–33 (PALP…YGVF), 45–65 (GALA…NAYV), 80–100 (FMKL…LTFI), 111–131 (PVLI…NGLI), 165–185 (FVLG…IYGF), 205–225 (IGVI…ISAV), 244–264 (AFFA…VLFV), 276–296 (IIVF…IGQS), 301–321 (LMAY…AAGT), 328–348 (VLIY…CILA), 373–393 (AFMM…AGFF), 407–429 (LYPL…LRIV), and 452–472 (VLGI…PLIL).

This sequence belongs to the complex I subunit 2 family. NDH-1 is composed of 14 different subunits. Subunits NuoA, H, J, K, L, M, N constitute the membrane sector of the complex.

The protein localises to the cell inner membrane. The catalysed reaction is a quinone + NADH + 5 H(+)(in) = a quinol + NAD(+) + 4 H(+)(out). Its function is as follows. NDH-1 shuttles electrons from NADH, via FMN and iron-sulfur (Fe-S) centers, to quinones in the respiratory chain. The immediate electron acceptor for the enzyme in this species is believed to be ubiquinone. Couples the redox reaction to proton translocation (for every two electrons transferred, four hydrogen ions are translocated across the cytoplasmic membrane), and thus conserves the redox energy in a proton gradient. The sequence is that of NADH-quinone oxidoreductase subunit N from Parvibaculum lavamentivorans (strain DS-1 / DSM 13023 / NCIMB 13966).